Here is a 42-residue protein sequence, read N- to C-terminus: Packaging protein P20 (42 aa).

A helical transmembrane segment spans residues 11–31; that stretch reads INWLIVILMLTIAGMAATLVC.

Heterodimer of P20 and P22; further multimerizes as hexamers of heterodimers. Part of the dodecameric portal complex that is composed of the packaging efficiency factor P6, the DNA packaging ATPase P9, and the internal heterododecamer P20/P22 which spans the virion inner membrane.

It localises to the virion membrane. Together with P22, forms the internal part of the portal complex embeded in the virion internal membrane and which plays critical roles in genome packaging and genome ejection. Both proteins multimerize as a single ring-shaped heterdodecamer arranged around a central channel and interact with the P6/P9 external part of the portal. The sequence is that of Packaging protein P20 (XX) from Acinetobacter calcoaceticus (Arthrobacter siderocapsulatus).